The primary structure comprises 371 residues: Solute carrier family 35 member F6 (371 aa).

A signal peptide spans 1–25; the sequence is MAWTKHQLFLAGLMLVTGSINTLSA. The next 2 membrane-spanning stretches (helical) occupy residues 48–68 and 89–109; these read FLQAVGMFLGEFSCLAAFYLL and LLFLPPALCDMTGTSLMYVAL. Residues 104–160 enclose the EamA domain; it reads LMYVALNMTSASSFQMLRGAVIIFTGLFSVAFLGRRLVLSQWLGILATIAGLVVVGL. A glycan (N-linked (GlcNAc...) asparagine) is linked at Asn-110. The next 7 helical transmembrane spans lie at 117–137, 140–160, 176–196, 216–236, 261–281, 295–312, and 317–336; these read FQMLRGAVIIFTGLFSVAFLG, LVLSQWLGILATIAGLVVVGL, VITGDLLIIMAQIIVAIQMVL, GLFGFVILSLLLVPMYYIPAG, LIAVALLGNISSIAFFNFAGI, LDSLRTVVIWALSLALGW, and ALQILGFLILLIGTALYNGL. The disordered stretch occupies residues 347–371; that stretch reads GRPPAEESEQERLLGGSRTPINDAS. Thr-365 is modified (phosphothreonine).

Belongs to the SLC35F solute transporter family. Interacts with SLC25A5.

The protein resides in the mitochondrion. It localises to the lysosome membrane. Functionally, involved in the maintenance of mitochondrial membrane potential in pancreatic ductal adenocarcinoma (PDAC) cells. Promotes pancreatic ductal adenocarcinoma (PDAC) cell growth. May play a role as a nucleotide-sugar transporter. The polypeptide is Solute carrier family 35 member F6 (SLC35F6) (Pongo abelii (Sumatran orangutan)).